The following is a 208-amino-acid chain: FMN-dependent NADH:quinone oxidoreductase 1 (208 aa).

17 to 19 (SVS) is a binding site for FMN.

This sequence belongs to the azoreductase type 1 family. As to quaternary structure, homodimer. Requires FMN as cofactor.

It carries out the reaction 2 a quinone + NADH + H(+) = 2 a 1,4-benzosemiquinone + NAD(+). The enzyme catalyses N,N-dimethyl-1,4-phenylenediamine + anthranilate + 2 NAD(+) = 2-(4-dimethylaminophenyl)diazenylbenzoate + 2 NADH + 2 H(+). Its function is as follows. Quinone reductase that provides resistance to thiol-specific stress caused by electrophilic quinones. In terms of biological role, also exhibits azoreductase activity. Catalyzes the reductive cleavage of the azo bond in aromatic azo compounds to the corresponding amines. This chain is FMN-dependent NADH:quinone oxidoreductase 1, found in Listeria innocua serovar 6a (strain ATCC BAA-680 / CLIP 11262).